The primary structure comprises 79 residues: UPF0150 protein ssr1765 (79 aa).

This sequence belongs to the UPF0150 family.

The polypeptide is UPF0150 protein ssr1765 (Synechocystis sp. (strain ATCC 27184 / PCC 6803 / Kazusa)).